A 276-amino-acid chain; its full sequence is NAD(+)--dinitrogen-reductase ADP-D-ribosyltransferase (276 aa).

As to quaternary structure, monomer.

The enzyme catalyses L-arginyl-[dinitrogen reductase] + NAD(+) = N(omega)-alpha-(ADP-D-ribosyl)-L-arginyl-[dinitrogen reductase] + nicotinamide + H(+). Its function is as follows. Involved in the regulation of the nitrogen fixation activity by the reversible ADP-ribosylation of the dinitrogenase reductase component of the nitrogenase enzyme complex. The ADP-ribosyltransferase (DraT) transfers the ADP-ribose group from NAD to dinitrogenase reductase. The ADP-ribose group is removed through the action of the ADP-ribosylglycohydrolase (DraG). This chain is NAD(+)--dinitrogen-reductase ADP-D-ribosyltransferase (draT), found in Rhodospirillum rubrum.